A 433-amino-acid chain; its full sequence is ATP-dependent RNA helicase SUB2 (433 aa).

Residues 1 to 17 are compositionally biased toward acidic residues; sequence MSAENQEELLDYSDSEE. Positions 1–39 are disordered; sequence MSAENQEELLDYSDSEEIAVPTTTQAGEGESANDKEADK. The short motif at 49-77 is the Q motif element; that stretch reads TGFRDFLLKPELLRAIGDCGFEHPSEVQQ. Positions 80-255 constitute a Helicase ATP-binding domain; it reads IPQSILGTDV…KKFMQNPLEI (176 aa). Position 93–100 (93–100) interacts with ATP; that stretch reads AKSGLGKT. A DEAD box motif is present at residues 202 to 205; that stretch reads DECD. Positions 267 to 428 constitute a Helicase C-terminal domain; it reads GLQQYYIKLE…EFPEEGVDPS (162 aa).

Belongs to the DEAD box helicase family. DECD subfamily.

Its subcellular location is the nucleus. It carries out the reaction ATP + H2O = ADP + phosphate + H(+). In terms of biological role, ATP-binding RNA helicase involved in transcription elongation and required for the export of mRNA out of the nucleus. SUB2 also plays a role in pre-mRNA splicing and spliceosome assembly. May be involved in rDNA and telomeric silencing, and maintenance of genome integrity. This Lodderomyces elongisporus (strain ATCC 11503 / CBS 2605 / JCM 1781 / NBRC 1676 / NRRL YB-4239) (Yeast) protein is ATP-dependent RNA helicase SUB2 (SUB2).